The primary structure comprises 366 residues: Transcription factor bHLH74 (366 aa).

A compositionally biased stretch (gly residues) spans 1-11 (MGGESNEGGEM). 2 disordered regions span residues 1–20 (MGGESNEGGEMGFKHGDDES) and 123–201 (GESS…APKE). Composition is skewed to basic and acidic residues over residues 123–134 (GESSHEDHHQVS) and 159–170 (KAVEEFQEDPQR). The region spanning 212 to 262 (QATNSHSLAERVRREKISERMRLLQELVPGCNKITGKAVMLDEIINYVQSL) is the bHLH domain.

Homodimer. Interacts with IBH1. Binds reversibly to CRY2 after blue light illumination. As to expression, expressed constitutively in roots, leaves, stems, and flowers.

The protein resides in the nucleus. In terms of biological role, transcriptional activator involved in cell elongation. Regulates the expression of a subset of genes involved in cell expansion by binding to the G-box motif. Binds to chromatin DNA of the FT gene and promotes its expression, and thus triggers flowering in response to blue light. The polypeptide is Transcription factor bHLH74 (BHLH74) (Arabidopsis thaliana (Mouse-ear cress)).